The primary structure comprises 109 residues: Large ribosomal subunit protein P1 (109 aa).

Residues 90-109 (AAAKKEEEEEDDDMGFGLFD) form a disordered region.

Belongs to the eukaryotic ribosomal protein P1/P2 family. As to quaternary structure, P1 and P2 exist as dimers at the large ribosomal subunit.

In terms of biological role, plays an important role in the elongation step of protein synthesis. The polypeptide is Large ribosomal subunit protein P1 (Trypanosoma cruzi).